The primary structure comprises 461 residues: Dihydrolipoyl dehydrogenase (461 aa).

FAD is bound by residues 33 to 41 (EAAEVGGVC), lysine 50, and alanine 112. Cysteine 41 and cysteine 46 are joined by a disulfide. NAD(+)-binding positions include 173–177 (GGGAV), glutamate 196, and 263–266 (AVGR). FAD contacts are provided by aspartate 306 and alanine 314. Histidine 437 (proton acceptor) is an active-site residue.

The protein belongs to the class-I pyridine nucleotide-disulfide oxidoreductase family. Homodimer. It depends on FAD as a cofactor.

It is found in the membrane. The enzyme catalyses N(6)-[(R)-dihydrolipoyl]-L-lysyl-[protein] + NAD(+) = N(6)-[(R)-lipoyl]-L-lysyl-[protein] + NADH + H(+). Functionally, has chromate reductase activity. This chain is Dihydrolipoyl dehydrogenase, found in Thermus scotoductus (strain ATCC 700910 / SA-01).